A 258-amino-acid polypeptide reads, in one-letter code: Imidazole glycerol phosphate synthase subunit HisF (258 aa).

Catalysis depends on residues Asp11 and Asp130.

Belongs to the HisA/HisF family. In terms of assembly, heterodimer of HisH and HisF.

It is found in the cytoplasm. It catalyses the reaction 5-[(5-phospho-1-deoxy-D-ribulos-1-ylimino)methylamino]-1-(5-phospho-beta-D-ribosyl)imidazole-4-carboxamide + L-glutamine = D-erythro-1-(imidazol-4-yl)glycerol 3-phosphate + 5-amino-1-(5-phospho-beta-D-ribosyl)imidazole-4-carboxamide + L-glutamate + H(+). It functions in the pathway amino-acid biosynthesis; L-histidine biosynthesis; L-histidine from 5-phospho-alpha-D-ribose 1-diphosphate: step 5/9. IGPS catalyzes the conversion of PRFAR and glutamine to IGP, AICAR and glutamate. The HisF subunit catalyzes the cyclization activity that produces IGP and AICAR from PRFAR using the ammonia provided by the HisH subunit. The chain is Imidazole glycerol phosphate synthase subunit HisF from Synechococcus sp. (strain CC9902).